Reading from the N-terminus, the 85-residue chain is Large ribosomal subunit protein bL27 (85 aa).

The interval 1–20 (MATKKAGGSTRNGRDSEAKR) is disordered.

This sequence belongs to the bacterial ribosomal protein bL27 family.

The sequence is that of Large ribosomal subunit protein bL27 from Pasteurella multocida (strain Pm70).